We begin with the raw amino-acid sequence, 176 residues long: Ribosome maturation factor RimM (176 aa).

Residues 92–165 (EDEFLYSDLI…RLVVVPPVYA (74 aa)) form the PRC barrel domain.

It belongs to the RimM family. As to quaternary structure, binds ribosomal protein uS19.

It localises to the cytoplasm. Functionally, an accessory protein needed during the final step in the assembly of 30S ribosomal subunit, possibly for assembly of the head region. Essential for efficient processing of 16S rRNA. May be needed both before and after RbfA during the maturation of 16S rRNA. It has affinity for free ribosomal 30S subunits but not for 70S ribosomes. The protein is Ribosome maturation factor RimM of Paramagnetospirillum magneticum (strain ATCC 700264 / AMB-1) (Magnetospirillum magneticum).